An 855-amino-acid polypeptide reads, in one-letter code: Valine--tRNA ligase (855 aa).

A 'HIGH' region motif is present at residues 42–52 (PTISGKLHIGH). Residues 574-578 (KMSKS) carry the 'KMSKS' region motif. Residue Lys-577 coordinates ATP.

The protein belongs to the class-I aminoacyl-tRNA synthetase family. ValS type 2 subfamily. As to quaternary structure, monomer.

Its subcellular location is the cytoplasm. The enzyme catalyses tRNA(Val) + L-valine + ATP = L-valyl-tRNA(Val) + AMP + diphosphate. Functionally, catalyzes the attachment of valine to tRNA(Val). As ValRS can inadvertently accommodate and process structurally similar amino acids such as threonine, to avoid such errors, it has a 'posttransfer' editing activity that hydrolyzes mischarged Thr-tRNA(Val) in a tRNA-dependent manner. The chain is Valine--tRNA ligase from Wolbachia sp. subsp. Brugia malayi (strain TRS).